The sequence spans 577 residues: Arginine--tRNA ligase (577 aa).

Positions 122–132 (PNVAKEMHVGH) match the 'HIGH' region motif.

It belongs to the class-I aminoacyl-tRNA synthetase family. In terms of assembly, monomer.

It is found in the cytoplasm. The catalysed reaction is tRNA(Arg) + L-arginine + ATP = L-arginyl-tRNA(Arg) + AMP + diphosphate. This chain is Arginine--tRNA ligase, found in Salmonella gallinarum (strain 287/91 / NCTC 13346).